We begin with the raw amino-acid sequence, 190 residues long: Potassium-transporting ATPase KdpC subunit (190 aa).

The helical transmembrane segment at 10 to 30 (TFLFLLLITGGVYPLLTTALG) threads the bilayer.

It belongs to the KdpC family. In terms of assembly, the system is composed of three essential subunits: KdpA, KdpB and KdpC.

It is found in the cell inner membrane. Functionally, part of the high-affinity ATP-driven potassium transport (or Kdp) system, which catalyzes the hydrolysis of ATP coupled with the electrogenic transport of potassium into the cytoplasm. This subunit acts as a catalytic chaperone that increases the ATP-binding affinity of the ATP-hydrolyzing subunit KdpB by the formation of a transient KdpB/KdpC/ATP ternary complex. The chain is Potassium-transporting ATPase KdpC subunit from Escherichia coli O45:K1 (strain S88 / ExPEC).